Here is a 384-residue protein sequence, read N- to C-terminus: DNA replication and repair protein RecF (384 aa).

30–37 provides a ligand contact to ATP; the sequence is GENAQGKT.

It belongs to the RecF family.

It is found in the cytoplasm. Its function is as follows. The RecF protein is involved in DNA metabolism; it is required for DNA replication and normal SOS inducibility. RecF binds preferentially to single-stranded, linear DNA. It also seems to bind ATP. In Levilactobacillus brevis (strain ATCC 367 / BCRC 12310 / CIP 105137 / JCM 1170 / LMG 11437 / NCIMB 947 / NCTC 947) (Lactobacillus brevis), this protein is DNA replication and repair protein RecF.